A 399-amino-acid chain; its full sequence is Phosphoglycerate kinase (399 aa).

Residues 21–23 (DFN), arginine 36, 59–62 (HLGR), arginine 120, and arginine 158 contribute to the substrate site. ATP contacts are provided by residues lysine 209, glycine 297, glutamate 328, and 355-358 (GGDS).

It belongs to the phosphoglycerate kinase family. In terms of assembly, monomer.

The protein localises to the cytoplasm. It catalyses the reaction (2R)-3-phosphoglycerate + ATP = (2R)-3-phospho-glyceroyl phosphate + ADP. Its pathway is carbohydrate degradation; glycolysis; pyruvate from D-glyceraldehyde 3-phosphate: step 2/5. This is Phosphoglycerate kinase from Streptococcus thermophilus (strain CNRZ 1066).